A 432-amino-acid chain; its full sequence is Gamma-glutamyl phosphate reductase (432 aa).

It belongs to the gamma-glutamyl phosphate reductase family.

The protein resides in the cytoplasm. It carries out the reaction L-glutamate 5-semialdehyde + phosphate + NADP(+) = L-glutamyl 5-phosphate + NADPH + H(+). The protein operates within amino-acid biosynthesis; L-proline biosynthesis; L-glutamate 5-semialdehyde from L-glutamate: step 2/2. In terms of biological role, catalyzes the NADPH-dependent reduction of L-glutamate 5-phosphate into L-glutamate 5-semialdehyde and phosphate. The product spontaneously undergoes cyclization to form 1-pyrroline-5-carboxylate. This is Gamma-glutamyl phosphate reductase from Kineococcus radiotolerans (strain ATCC BAA-149 / DSM 14245 / SRS30216).